The chain runs to 238 residues: Large ribosomal subunit protein uL1 (238 aa).

The tract at residues 217–238 (TNGPGVPVDETIQKNYADDAEA) is disordered.

Belongs to the universal ribosomal protein uL1 family. In terms of assembly, part of the 50S ribosomal subunit.

Its function is as follows. Binds directly to 23S rRNA. The L1 stalk is quite mobile in the ribosome, and is involved in E site tRNA release. In terms of biological role, protein L1 is also a translational repressor protein, it controls the translation of the L11 operon by binding to its mRNA. The chain is Large ribosomal subunit protein uL1 from Corynebacterium urealyticum (strain ATCC 43042 / DSM 7109).